The sequence spans 68 residues: Protein transport protein Sec61 subunit gamma (68 aa).

Over 1–32 the chain is Cytoplasmic; sequence MDQVMQFVEPSRQFVKDSIRLVKRCTKPDRKE. The helical transmembrane segment at 33–61 threads the bilayer; that stretch reads FQKIAMATAIGFAIMGFIGFFVKLIHIPI. Over 62-68 the chain is Extracellular; it reads NNIIVGS.

It belongs to the SecE/SEC61-gamma family. In terms of assembly, the SEC61 channel-forming translocon complex consists of channel-forming core components SEC61A1, SEC61B and SEC61G and different auxiliary components such as SEC62 and SEC63. The SEC61 channel associates with the multi-pass translocon (MPT) complex.

It is found in the endoplasmic reticulum membrane. Its function is as follows. Component of SEC61 channel-forming translocon complex that mediates transport of signal peptide-containing precursor polypeptides across the endoplasmic reticulum (ER). Forms a ribosome receptor and a gated pore in the ER membrane, both functions required for cotranslational translocation of nascent polypeptides. The SEC61 channel is also involved in ER membrane insertion of transmembrane proteins: it mediates membrane insertion of the first few transmembrane segments of proteins, while insertion of subsequent transmembrane regions of multi-pass membrane proteins is mediated by the multi-pass translocon (MPT) complex. The chain is Protein transport protein Sec61 subunit gamma (sec61g) from Xenopus laevis (African clawed frog).